Here is a 181-residue protein sequence, read N- to C-terminus: Shikimate kinase (181 aa).

11-16 (GAGKSK) is an ATP binding site. A Mg(2+)-binding site is contributed by Ser-15. Substrate is bound by residues Asp-33, Arg-58, and Gly-80. Position 128 (Arg-128) interacts with ATP. Arg-144 serves as a coordination point for substrate.

The protein belongs to the shikimate kinase family. Monomer. Mg(2+) is required as a cofactor.

The protein resides in the cytoplasm. It catalyses the reaction shikimate + ATP = 3-phosphoshikimate + ADP + H(+). It participates in metabolic intermediate biosynthesis; chorismate biosynthesis; chorismate from D-erythrose 4-phosphate and phosphoenolpyruvate: step 5/7. In terms of biological role, catalyzes the specific phosphorylation of the 3-hydroxyl group of shikimic acid using ATP as a cosubstrate. The polypeptide is Shikimate kinase (Leptospira biflexa serovar Patoc (strain Patoc 1 / Ames)).